Reading from the N-terminus, the 120-residue chain is Immunoglobulin kappa variable 2-24 (120 aa).

An N-terminal signal peptide occupies residues 1-19 (MRLLAQLLGLLMLWVPGSS). One can recognise an Ig-like domain in the interval 20–120 (GDIVMTQTPL…YYCMQATQFP (101 aa)). A framework-1 region spans residues 21 to 43 (DIVMTQTPLSSPVTLGQPASISC). Cys43 and Cys113 are oxidised to a cystine. Residues 44–59 (RSSQSLVHSDGNTYLS) are complementarity-determining-1. The tract at residues 60–74 (WLQQRPGQPPRLLIY) is framework-2. Residues 75–81 (KISNRFS) form a complementarity-determining-2 region. A framework-3 region spans residues 82-113 (GVPDRFSGSGAGTDFTLKISRVEAEDVGVYYC). The complementarity-determining-3 stretch occupies residues 114–120 (MQATQFP).

As to quaternary structure, immunoglobulins are composed of two identical heavy chains and two identical light chains; disulfide-linked.

The protein resides in the secreted. The protein localises to the cell membrane. Its function is as follows. V region of the variable domain of immunoglobulin light chains that participates in the antigen recognition. Immunoglobulins, also known as antibodies, are membrane-bound or secreted glycoproteins produced by B lymphocytes. In the recognition phase of humoral immunity, the membrane-bound immunoglobulins serve as receptors which, upon binding of a specific antigen, trigger the clonal expansion and differentiation of B lymphocytes into immunoglobulins-secreting plasma cells. Secreted immunoglobulins mediate the effector phase of humoral immunity, which results in the elimination of bound antigens. The antigen binding site is formed by the variable domain of one heavy chain, together with that of its associated light chain. Thus, each immunoglobulin has two antigen binding sites with remarkable affinity for a particular antigen. The variable domains are assembled by a process called V-(D)-J rearrangement and can then be subjected to somatic hypermutations which, after exposure to antigen and selection, allow affinity maturation for a particular antigen. This Homo sapiens (Human) protein is Immunoglobulin kappa variable 2-24.